Consider the following 504-residue polypeptide: Maturase K (504 aa).

Belongs to the intron maturase 2 family. MatK subfamily.

It is found in the plastid. It localises to the chloroplast. In terms of biological role, usually encoded in the trnK tRNA gene intron. Probably assists in splicing its own and other chloroplast group II introns. The polypeptide is Maturase K (Vigna mungo (Black gram)).